The following is a 295-amino-acid chain: Protease HtpX (295 aa).

2 helical membrane passes run 4–24 (IFLFLATNLAIIVVLSIVLRL) and 42–62 (ALLIFAAVFGFGGSFISLAIS). H147 is a Zn(2+) binding site. E148 is an active-site residue. H151 serves as a coordination point for Zn(2+). The next 2 helical transmembrane spans lie at 155–175 (GDMVTLALIQGVVNTFVIFLA) and 197–217 (FWITTIVAEIVFAILASIIVM). Zn(2+) is bound at residue E224.

It belongs to the peptidase M48B family. Zn(2+) is required as a cofactor.

Its subcellular location is the cell inner membrane. This is Protease HtpX from Thioalkalivibrio sulfidiphilus (strain HL-EbGR7).